The sequence spans 147 residues: MKLENLKSKEGSRHKTKRVGRGFGSGIGKTSTRGSKGQKSRKSGHTRPGFEGGQTTLYRRIPKIGFNNKNFANNYNVVTLNNIVKLNLANVDKKVLVEKGLIEDNKLPIKVIGTATISKPISVSAHKFSKGSVATLEKSKSKFVVIK.

Positions 1–13 are enriched in basic and acidic residues; the sequence is MKLENLKSKEGSR. The tract at residues 1 to 54 is disordered; the sequence is MKLENLKSKEGSRHKTKRVGRGFGSGIGKTSTRGSKGQKSRKSGHTRPGFEGGQ. The segment covering 36–45 has biased composition (basic residues); the sequence is KGQKSRKSGH.

The protein belongs to the universal ribosomal protein uL15 family. As to quaternary structure, part of the 50S ribosomal subunit.

Binds to the 23S rRNA. The sequence is that of Large ribosomal subunit protein uL15 from Malacoplasma penetrans (strain HF-2) (Mycoplasma penetrans).